Consider the following 213-residue polypeptide: Ras-related protein Rab-39B (213 aa).

Residues S17, G20, K21, S22, C23, S37, and T40 each coordinate GTP. S22 is a Mg(2+) binding site. Residues 35 to 43 (QVSDPTVGV) are switch-I. Residues T40 and D64 each coordinate Mg(2+). The GTP site is built by G67, H123, K124, D126, A154, and R155. The switch-II stretch occupies residues 67–83 (GQERFRSITRAYYRNSV). The residue at position 201 (S201) is a Phosphoserine. Residues C211 and C213 are each lipidated (S-geranylgeranyl cysteine). C213 carries the cysteine methyl ester modification.

It belongs to the small GTPase superfamily. Rab family. As to quaternary structure, interacts (GDP-bound) with C9orf72; C9orf72 in complex with SMCR8 acts as a GEF for RAB39B. Interacts (in GTP-bound form) with PICK1 (via PDZ domain); a PICK1 homodimer may allow simultaneous association of RAB39B and GRIA2 to PICK1 which is involved in GRIA2 trafficking. Interacts with isoform c of RASSF1; the interaction is strong. Interacts with isoform a of RASSF1; the interaction is weak. Interacts with the DLG4/PSD-95. Interacts (GTP-bound) with HOPS complex components VPS39 and VPS41. Mg(2+) serves as cofactor. Specifically expressed in neuron and neuronal precursors in the brain. Expression is high in all regions of the brain with highest levels observed in the hippocampus.

The protein resides in the cell membrane. The protein localises to the cytoplasmic vesicle membrane. It is found in the golgi apparatus. Its subcellular location is the cytoplasmic vesicle. It localises to the autophagosome membrane. The protein resides in the autolysosome membrane. The catalysed reaction is GTP + H2O = GDP + phosphate + H(+). Its activity is regulated as follows. Regulated by guanine nucleotide exchange factors (GEFs) including C9orf72-SMCR8 complex, which promote the exchange of bound GDP for free GTP. Regulated by GTPase activating proteins (GAPs) which increase the GTP hydrolysis activity. Inhibited by GDP dissociation inhibitors (GDIs). The small GTPases Rab are key regulators of intracellular membrane trafficking, from the formation of transport vesicles to their fusion with membranes. Rabs cycle between an inactive GDP-bound form and an active GTP-bound form that is able to recruit to membranes different sets of downstream effectors directly responsible for vesicle formation, movement, tethering and fusion. RAB39B is involved in autophagy and may function in autophagosome formation. Binds downstream effector PICK1 to ensure selectively GRIA2 exit from the endoplasmic reticulum to the Golgi and to regulate AMPAR composition at the post-synapses and thus synaptic transmission. May regulate the homeostasis of SNCA/alpha-synuclein. The polypeptide is Ras-related protein Rab-39B (Mus musculus (Mouse)).